The following is a 154-amino-acid chain: MAPARAGCCPLLLLLLGLWVAQIPVSAKPKDMTSSQWFKTQHVQPSPEACYLAMSNISKYIEWCKDLNTFLHEPFSSVATTCQTPNIACKNGHKNCHQSSGPMSLTMCELTSGKYPNCRYKEKHLNAPYIVARDPPQQGDPGYPLVPVHLDKVV.

The first 27 residues, 1-27 (MAPARAGCCPLLLLLLGLWVAQIPVSA), serve as a signal peptide directing secretion. The Proton acceptor role is filled by H42. 2 disulfide bridges follow: C64-C118 and C89-C96. Residues 65-69 (KDLNT) and K90 each bind substrate. Residue H149 is the Proton donor of the active site.

The protein belongs to the pancreatic ribonuclease family.

The protein resides in the secreted. Functionally, has a low ribonuclease activity. This is Ribonuclease 8 (RNASE8) from Chlorocebus aethiops (Green monkey).